We begin with the raw amino-acid sequence, 69 residues long: Brevinin-1CG1 (69 aa).

A signal peptide spans 1-22 (MFTMKKSLLLLFFLGTINLSLC). The propeptide at 23–43 (EQERNAEEERRDDDEMDVEVE) is removed in mature form. C63 and C69 are disulfide-bonded.

In terms of tissue distribution, expressed by the skin glands.

It localises to the secreted. Antimicrobial peptide. Active against Gram-positive bacteria R.rhodochrous X15 and B.licheniformis X39 and against Gram-negative bacterium E.coli ATCC 25922. Has antifungal activity against a slime mold isolate. Has weak hemolytic activity against human erythrocytes. The polypeptide is Brevinin-1CG1 (Amolops chunganensis (Chungan torrent frog)).